The following is a 744-amino-acid chain: Polyribonucleotide nucleotidyltransferase (744 aa).

The Mg(2+) site is built by Asp-487 and Asp-493. A KH domain is found at 554-613 (PSTTTLKVDKDKIRDIIGPGGKVIKEICETSGAKIDISDDGTVSIYASDKDKLKVALDKV). Positions 623–691 (GEVFNGTVMK…NKGKAKLTIK (69 aa)) constitute an S1 motif domain. Residues 691-744 (KNAEKDKSSANPKPKNSPKEHQEPEKRDNGKKRAWNEDNNAETTEVVTERKYFS) form a disordered region. Residues 707–718 (SPKEHQEPEKRD) are compositionally biased toward basic and acidic residues. Residues 727-736 (EDNNAETTEV) show a composition bias toward polar residues.

Belongs to the polyribonucleotide nucleotidyltransferase family. It depends on Mg(2+) as a cofactor.

The protein localises to the cytoplasm. The enzyme catalyses RNA(n+1) + phosphate = RNA(n) + a ribonucleoside 5'-diphosphate. Involved in mRNA degradation. Catalyzes the phosphorolysis of single-stranded polyribonucleotides processively in the 3'- to 5'-direction. The protein is Polyribonucleotide nucleotidyltransferase of Rickettsia bellii (strain OSU 85-389).